The primary structure comprises 697 residues: MAR-binding filament-like protein 1 (697 aa).

The transit peptide at 1–41 (MATSCFPPFSASSSSLCSSQFTPLLSCPRNTQICRKKRPVM) directs the protein to the chloroplast. The transit peptide at 42–79 (ASMHSENQKESNVCNRRSILFVGFSVLPLLNLRARALE) directs the protein to the thylakoid. Residues 80–106 (GLSTDSQAQPQKEETEQTIQGSAGNPF) are Lumenal, thylakoid-facing. The disordered stretch occupies residues 81 to 100 (LSTDSQAQPQKEETEQTIQG). A helical membrane pass occupies residues 107–127 (VSLLNGLGVVGSGVLGSLYAL). Over 128–697 (ARNEKAVSDA…GEKEKVNVQQ (570 aa)) the chain is Stromal. Residues 203–671 (LQNEKKLAED…KGEILRLRSQ (469 aa)) are a coiled coil. Residues 599–629 (TSRNSSLEDEREVHRQSVSEQKQISQEAQEN) are disordered. Over residues 604 to 615 (SLEDEREVHRQS) the composition is skewed to basic and acidic residues. Positions 616–627 (VSEQKQISQEAQ) are enriched in polar residues.

Interacts with MAF1. Interacts with PTST2; the interaction is essential for the initiation of starch granules biosynthesis in leaf chloroplasts, for the correct location of the process in the stromal spaces between the thylakoid membranes, and for the association of PTST2 with the thylakoid membranes. Phosphorylated in vitro by human casein kinase II. In terms of processing, predicted to be translocated into the thylakoid by the Tat system.

It localises to the plastid. The protein localises to the chloroplast. It is found in the chloroplast thylakoid membrane. The protein resides in the chloroplast stroma. Its subcellular location is the chloroplast nucleoid. It localises to the nucleus. The protein localises to the nucleus matrix. Its function is as follows. Required for the initiation of starch granules biosynthesis in leaf chloroplasts. Anchored to the thylakoid membranes with its C-terminus facing into the stroma where it is essential for localizing PTST2 and SS4 to the stromal spaces between the thylakoid membranes in order to begin starch granule formation. Associated with leaf chloroplastic nucleoids in vivo. Binds to various chloroplastic double-stranded DNA fragments without particular sequence specificity in vitro. May function at the interface between nucleoids and thylakoids possibly by anchoring nucleoids to the thylakoid membrane system in mature chloroplasts. Binds nuclear DNA. Interacts with chromatin via matrix attachment regions (MARs). Likely to participate in nuclear architecture by connecting chromatin with the nuclear matrix and potentially with the nuclear envelope. This is MAR-binding filament-like protein 1 from Solanum lycopersicum (Tomato).